The chain runs to 180 residues: NADH-quinone oxidoreductase subunit I 1 (180 aa).

2 consecutive 4Fe-4S ferredoxin-type domains span residues 50 to 80 (LSRD…LQKT) and 90 to 119 (EFFR…LTPD). Positions 60, 63, 66, 70, 99, 102, 105, and 109 each coordinate [4Fe-4S] cluster.

The protein belongs to the complex I 23 kDa subunit family. NDH-1 is composed of 14 different subunits. Subunits NuoA, H, J, K, L, M, N constitute the membrane sector of the complex. It depends on [4Fe-4S] cluster as a cofactor.

The protein resides in the cell inner membrane. The enzyme catalyses a quinone + NADH + 5 H(+)(in) = a quinol + NAD(+) + 4 H(+)(out). NDH-1 shuttles electrons from NADH, via FMN and iron-sulfur (Fe-S) centers, to quinones in the respiratory chain. The immediate electron acceptor for the enzyme in this species is believed to be ubiquinone. Couples the redox reaction to proton translocation (for every two electrons transferred, four hydrogen ions are translocated across the cytoplasmic membrane), and thus conserves the redox energy in a proton gradient. This chain is NADH-quinone oxidoreductase subunit I 1, found in Nitrosococcus oceani (strain ATCC 19707 / BCRC 17464 / JCM 30415 / NCIMB 11848 / C-107).